The following is a 131-amino-acid chain: Heterochromatin silencing protein rss1 (131 aa).

Monomer.

It localises to the cytoplasm. Its subcellular location is the nucleus. In terms of biological role, required for heterochromatin silencing within pericentromeric repeats and at telomers. Facilitates the recruitment of Clr6 histone deacetylase (HDAC) by interacting with histones. Also interacts with Rad25, which mediates heterochromatin silencing in DNA repeats by recruiting the RITS complex. Together with Rad25, forms a regulatory hub that defines heterochromatin silencing within tandem repeats via linking RNAi and HDAC. The sequence is that of Heterochromatin silencing protein rss1 (rss1) from Schizosaccharomyces pombe (strain 972 / ATCC 24843) (Fission yeast).